The sequence spans 267 residues: Hydroxyethylthiazole kinase (267 aa).

Position 42 (methionine 42) interacts with substrate. ATP-binding residues include arginine 118 and serine 164. Alanine 191 serves as a coordination point for substrate.

It belongs to the Thz kinase family. Mg(2+) is required as a cofactor.

It carries out the reaction 5-(2-hydroxyethyl)-4-methylthiazole + ATP = 4-methyl-5-(2-phosphooxyethyl)-thiazole + ADP + H(+). It functions in the pathway cofactor biosynthesis; thiamine diphosphate biosynthesis; 4-methyl-5-(2-phosphoethyl)-thiazole from 5-(2-hydroxyethyl)-4-methylthiazole: step 1/1. Its function is as follows. Catalyzes the phosphorylation of the hydroxyl group of 4-methyl-5-beta-hydroxyethylthiazole (THZ). In Pasteurella multocida (strain Pm70), this protein is Hydroxyethylthiazole kinase.